The chain runs to 55 residues: Large ribosomal subunit protein bL33B (55 aa).

It belongs to the bacterial ribosomal protein bL33 family.

In Rhodococcus jostii (strain RHA1), this protein is Large ribosomal subunit protein bL33B.